Reading from the N-terminus, the 64-residue chain is Large ribosomal subunit protein bL35 (64 aa).

Residues 1–21 (MPKMKTNRGAAKRFKVKKSGK) form a disordered region. Residues 10–21 (AAKRFKVKKSGK) show a composition bias toward basic residues.

It belongs to the bacterial ribosomal protein bL35 family.

This is Large ribosomal subunit protein bL35 from Nautilia profundicola (strain ATCC BAA-1463 / DSM 18972 / AmH).